The sequence spans 151 residues: Ribonuclease H (151 aa).

An RNase H type-1 domain is found at 1 to 143; sequence MEEYVIYTDG…VDRVARKEAA (143 aa). Positions 9, 48, 71, and 135 each coordinate Mg(2+).

This sequence belongs to the RNase H family. In terms of assembly, monomer. Requires Mg(2+) as cofactor.

It localises to the cytoplasm. It catalyses the reaction Endonucleolytic cleavage to 5'-phosphomonoester.. In terms of biological role, endonuclease that specifically degrades the RNA of RNA-DNA hybrids. In Neorickettsia sennetsu (strain ATCC VR-367 / Miyayama) (Ehrlichia sennetsu), this protein is Ribonuclease H.